Here is a 337-residue protein sequence, read N- to C-terminus: Trace amine-associated receptor 5 (337 aa).

Residues 1 to 34 lie on the Extracellular side of the membrane; the sequence is MRAVFIQGAEEHPAAFCYQVNGSCPRTVHTLGIQ. An N-linked (GlcNAc...) asparagine glycan is attached at Asn-21. 2 disulfide bridges follow: Cys-24/Cys-188 and Cys-99/Cys-192. A helical transmembrane segment spans residues 35-55; it reads LVIYLACAAGMLIIVLGNLFV. Residues 56-70 are Cytoplasmic-facing; the sequence is AFAVSYFKALHTPTN. The chain crosses the membrane as a helical span at residues 71–91; the sequence is FLLLSLALADMFLGLLVLPLS. The Extracellular segment spans residues 92–109; it reads TIRSVESCWFFGDFLCRL. Residues 110–130 form a helical membrane-spanning segment; it reads HTYLDPLFCLTSIFHLCFISI. The Cytoplasmic portion of the chain corresponds to 131 to 154; the sequence is DRHCAICDPLLYPSKFTVRVALRY. The chain crosses the membrane as a helical span at residues 155 to 175; the sequence is ILAGWGVPAAYTSLFLYTDVV. Positions 176–189 are extracellular Loop 2 (ECL2); it reads ETRLSQWLEEMPCV. The Extracellular portion of the chain corresponds to 176–204; the sequence is ETRLSQWLEEMPCVGSCQLLLNKFWGWLN. Residues 205 to 225 traverse the membrane as a helical segment; it reads FPLFFVPCLIMISLYVKIFVV. The Cytoplasmic portion of the chain corresponds to 226–253; that stretch reads ATRQAQQITTLSKNLAGAAKHDRKAAKT. Residues 254 to 274 form a helical membrane-spanning segment; it reads LGIAVGIYLLCWLPFTIDTMV. Residues 275-284 are Extracellular-facing; that stretch reads DSLLHFITPP. Residues 285 to 307 traverse the membrane as a helical segment; the sequence is LVFDIFIWFAYFNSACNPIIYVF. Topologically, residues 308–337 are cytoplasmic; sequence SYQWFRKALKLTLSQKVFSPQTRTVDLYQE.

It belongs to the G-protein coupled receptor 1 family.

The protein localises to the cell membrane. Its function is as follows. Olfactory receptor specific for trimethylamine, a trace amine. Trimethylamine is a bacterial metabolite found in some animal odors. Trimethylamine-binding causes a conformation change that triggers signaling via G(s)-class of G alpha proteins (GNAL or GNAS). The polypeptide is Trace amine-associated receptor 5 (TAAR5) (Pan troglodytes (Chimpanzee)).